Here is a 420-residue protein sequence, read N- to C-terminus: Serine hydroxymethyltransferase (420 aa).

(6S)-5,6,7,8-tetrahydrofolate is bound by residues Leu-121 and 125–127 (GHL). Lys-230 is modified (N6-(pyridoxal phosphate)lysine). Residue 355 to 357 (SPF) coordinates (6S)-5,6,7,8-tetrahydrofolate.

Belongs to the SHMT family. In terms of assembly, homodimer. Requires pyridoxal 5'-phosphate as cofactor.

It is found in the cytoplasm. The catalysed reaction is (6R)-5,10-methylene-5,6,7,8-tetrahydrofolate + glycine + H2O = (6S)-5,6,7,8-tetrahydrofolate + L-serine. It participates in one-carbon metabolism; tetrahydrofolate interconversion. The protein operates within amino-acid biosynthesis; glycine biosynthesis; glycine from L-serine: step 1/1. Functionally, catalyzes the reversible interconversion of serine and glycine with tetrahydrofolate (THF) serving as the one-carbon carrier. This reaction serves as the major source of one-carbon groups required for the biosynthesis of purines, thymidylate, methionine, and other important biomolecules. Also exhibits THF-independent aldolase activity toward beta-hydroxyamino acids, producing glycine and aldehydes, via a retro-aldol mechanism. This is Serine hydroxymethyltransferase from Streptococcus gordonii (strain Challis / ATCC 35105 / BCRC 15272 / CH1 / DL1 / V288).